The sequence spans 347 residues: Phenylalanine--tRNA ligase alpha subunit (347 aa).

Residue glutamate 265 coordinates Mg(2+).

It belongs to the class-II aminoacyl-tRNA synthetase family. Phe-tRNA synthetase alpha subunit type 1 subfamily. In terms of assembly, tetramer of two alpha and two beta subunits. The cofactor is Mg(2+).

Its subcellular location is the cytoplasm. It carries out the reaction tRNA(Phe) + L-phenylalanine + ATP = L-phenylalanyl-tRNA(Phe) + AMP + diphosphate + H(+). The protein is Phenylalanine--tRNA ligase alpha subunit of Mycolicibacterium vanbaalenii (strain DSM 7251 / JCM 13017 / BCRC 16820 / KCTC 9966 / NRRL B-24157 / PYR-1) (Mycobacterium vanbaalenii).